A 260-amino-acid chain; its full sequence is Snake venom serine protease homolog (260 aa).

A signal peptide spans M1–A18. The propeptide occupies Q19–L24. Residues I25–A251 form the Peptidase S1 domain. Intrachain disulfides connect C31–C165, C52–C68, C100–C258, C144–C212, C176–C191, and C202–C227. N83 is a glycosylation site (N-linked (GlcNAc...) asparagine).

This sequence belongs to the peptidase S1 family. Snake venom subfamily. As to expression, expressed by the venom gland.

The protein resides in the secreted. Snake venom serine protease homolog that may act in the hemostasis system of the prey. This chain is Snake venom serine protease homolog, found in Bothrops jararacussu (Jararacussu).